Here is a 104-residue protein sequence, read N- to C-terminus: Protein RnfH (104 aa).

Belongs to the UPF0125 (RnfH) family.

The sequence is that of Protein RnfH from Pseudomonas fluorescens (strain ATCC BAA-477 / NRRL B-23932 / Pf-5).